Reading from the N-terminus, the 606-residue chain is MPYEIKKVFASLPQVERGVSKILGGDPKGDNFLYTNGKCVILRNIDNPAVADIYTEHAHQVVVAKYAPSGFYIASGDISGKLRIWDTTQKEHILKYEYQPFAGKIKDIAWTEDSKRIAVVGEGREKFGAVFLWDTGSSVGEITGHNKVINSVDIKQNRPYRLATGSDDNCAAFFEGPPFKFKFTIGDHSRFVNCVRFSPDGNRFATASADGQIFIYDGKTGEKVCALGGSKAHDGGIYAISWSPDSTHLLSASGDKTSKIWDVNVNSVVSTFPMGSNVLDQQLGCLWQKDHLLSISLSGYINYLDKNNPSKPLRVIKGHSKSIQCLTVHKNGGKSYIYSGSHDGHINYWDSETGENDSFSGKGHTNQVSRMTVDESGQLVSCSMDDTVRYTNLTLRDYSGQGVVKLDVQPKCVAVGPGGYTVVVCIGQIVLLKDQKKCFSIDNPGYEPEVVAVHPGGDTVAVGGSDGNVRVYSILGATLKDEGKLLEAKGPVTDLAYSHDGAFLAVCDASKVVTVFSVADGYSENNVFYGHHAKIVCLAWSPDNEHFASGGMDMMVYVWTLSDPETKVKIQDAHRLHHVSSLAWLDEHTLVTTSHDASVKEWTITY.

WD repeat units follow at residues 4–45 (EIKK…LRNI), 48–87 (PAVA…IWDT), 93–135 (ILKY…LWDT), 138–176 (SVGE…FFEG), 180–218 (KFKF…IYDG), 224–263 (VCAL…IWDV), 270–306 (STFP…YLDK), 311–351 (KPLR…YWDS), 358–408 (SFSG…KLDV), 432–474 (LKDQ…VYSI), 480–518 (KDEG…VFSV), 523–561 (SENN…VWTL), and 566–604 (TKVK…EWTI). N6-acetyllysine is present on residues Lys-28, Lys-81, Lys-95, and Lys-115. Residue Tyr-238 is modified to Phosphotyrosine. Lys-480 is modified (N6-acetyllysine).

It belongs to the WD repeat AIP1 family.

Its subcellular location is the cytoplasm. It localises to the cytoskeleton. The protein localises to the cell projection. It is found in the podosome. Induces disassembly of actin filaments in conjunction with ADF/cofilin family proteins. Enhances cofilin-mediated actin severing. Involved in cytokinesis. Involved in chemotactic cell migration by restricting lamellipodial membrane protrusions. Involved in myocardium sarcomere organization. Required for cardiomyocyte growth and maintenance. Involved in megakaryocyte maturation and platelet shedding. Required for the establishment of planar cell polarity (PCP) during follicular epithelium development and for cell shape changes during PCP; the function seems to implicate cooperation with CFL1 and/or DSTN/ADF. Involved in the generation/maintenance of cortical tension. Involved in assembly and maintenance of epithelial apical cell junctions and plays a role in the organization of the perijunctional actomyosin belt. In Rattus norvegicus (Rat), this protein is WD repeat-containing protein 1 (Wdr1).